Consider the following 121-residue polypeptide: MPRIAGVDLPRDKRIAYGLTYIFGIGINTAHKIVADAGVPEDVRVRDLTPDQEDKVRAEVDKYKVEGDLRREVSLNIKNLQEIGSYRGMRHRRGLPVRGQHTKNNARTRKGKAVSIAGKKK.

The segment at 89 to 121 is disordered; the sequence is MRHRRGLPVRGQHTKNNARTRKGKAVSIAGKKK.

The protein belongs to the universal ribosomal protein uS13 family. As to quaternary structure, part of the 30S ribosomal subunit. Forms a loose heterodimer with protein S19. Forms two bridges to the 50S subunit in the 70S ribosome.

Located at the top of the head of the 30S subunit, it contacts several helices of the 16S rRNA. In the 70S ribosome it contacts the 23S rRNA (bridge B1a) and protein L5 of the 50S subunit (bridge B1b), connecting the 2 subunits; these bridges are implicated in subunit movement. Contacts the tRNAs in the A and P-sites. The polypeptide is Small ribosomal subunit protein uS13 (Levilactobacillus brevis (strain ATCC 367 / BCRC 12310 / CIP 105137 / JCM 1170 / LMG 11437 / NCIMB 947 / NCTC 947) (Lactobacillus brevis)).